We begin with the raw amino-acid sequence, 112 residues long: T cell receptor alpha variable 41 (112 aa).

Residues Met1 to Ala21 form the signal peptide. The Ig-like domain occupies Asn24–Arg112. 2 N-linked (GlcNAc...) asparagine glycosylation sites follow: Asn32 and Asn44. An intrachain disulfide couples Cys45 to Cys109.

In terms of assembly, alpha-beta TR is a heterodimer composed of an alpha and beta chain; disulfide-linked. The alpha-beta TR is associated with the transmembrane signaling CD3 coreceptor proteins to form the TR-CD3 (TcR or TCR). The assembly of alpha-beta TR heterodimers with CD3 occurs in the endoplasmic reticulum where a single alpha-beta TR heterodimer associates with one CD3D-CD3E heterodimer, one CD3G-CD3E heterodimer and one CD247 homodimer forming a stable octameric structure. CD3D-CD3E and CD3G-CD3E heterodimers preferentially associate with TR alpha and TR beta chains, respectively. The association of the CD247 homodimer is the last step of TcR assembly in the endoplasmic reticulum and is required for transport to the cell surface.

The protein resides in the cell membrane. In terms of biological role, v region of the variable domain of T cell receptor (TR) alpha chain that participates in the antigen recognition. Alpha-beta T cell receptors are antigen specific receptors which are essential to the immune response and are present on the cell surface of T lymphocytes. Recognize peptide-major histocompatibility (MH) (pMH) complexes that are displayed by antigen presenting cells (APC), a prerequisite for efficient T cell adaptive immunity against pathogens. Binding of alpha-beta TR to pMH complex initiates TR-CD3 clustering on the cell surface and intracellular activation of LCK that phosphorylates the ITAM motifs of CD3G, CD3D, CD3E and CD247 enabling the recruitment of ZAP70. In turn ZAP70 phosphorylates LAT, which recruits numerous signaling molecules to form the LAT signalosome. The LAT signalosome propagates signal branching to three major signaling pathways, the calcium, the mitogen-activated protein kinase (MAPK) kinase and the nuclear factor NF-kappa-B (NF-kB) pathways, leading to the mobilization of transcription factors that are critical for gene expression and essential for T cell growth and differentiation. The T cell repertoire is generated in the thymus, by V-(D)-J rearrangement. This repertoire is then shaped by intrathymic selection events to generate a peripheral T cell pool of self-MH restricted, non-autoaggressive T cells. Post-thymic interaction of alpha-beta TR with the pMH complexes shapes TR structural and functional avidity. The sequence is that of T cell receptor alpha variable 41 from Homo sapiens (Human).